The following is a 256-amino-acid chain: DNA repair protein RecO (256 aa).

It belongs to the RecO family.

Its function is as follows. Involved in DNA repair and RecF pathway recombination. The protein is DNA repair protein RecO of Streptococcus pneumoniae serotype 19F (strain G54).